The primary structure comprises 256 residues: 5-keto-4-deoxy-D-glucarate aldolase (256 aa).

Residue H50 is the Proton acceptor of the active site. Q151 contributes to the substrate binding site. Position 153 (E153) interacts with Mg(2+). Substrate contacts are provided by S178 and D179. D179 provides a ligand contact to Mg(2+).

Belongs to the HpcH/HpaI aldolase family. KDGluc aldolase subfamily. In terms of assembly, homohexamer; trimer of dimers. Mg(2+) is required as a cofactor.

The enzyme catalyses 5-dehydro-4-deoxy-D-glucarate = 2-hydroxy-3-oxopropanoate + pyruvate. The catalysed reaction is 2-dehydro-3-deoxy-D-glucarate = 2-hydroxy-3-oxopropanoate + pyruvate. It participates in carbohydrate acid metabolism; galactarate degradation; D-glycerate from galactarate: step 2/3. Its function is as follows. Catalyzes the reversible retro-aldol cleavage of both 5-keto-4-deoxy-D-glucarate and 2-keto-3-deoxy-D-glucarate to pyruvate and tartronic semialdehyde. This chain is 5-keto-4-deoxy-D-glucarate aldolase, found in Salmonella paratyphi A (strain ATCC 9150 / SARB42).